Reading from the N-terminus, the 66-residue chain is Large ribosomal subunit protein bL33c (66 aa).

It belongs to the bacterial ribosomal protein bL33 family.

It localises to the plastid. The protein resides in the chloroplast. This is Large ribosomal subunit protein bL33c from Oenothera argillicola (Appalachian evening primrose).